The primary structure comprises 570 residues: Sulfite reductase [NADPH] hemoprotein beta-component (570 aa).

Residues cysteine 434, cysteine 440, cysteine 479, and cysteine 483 each contribute to the [4Fe-4S] cluster site. Position 483 (cysteine 483) interacts with siroheme.

This sequence belongs to the nitrite and sulfite reductase 4Fe-4S domain family. Alpha(8)-beta(8). The alpha component is a flavoprotein, the beta component is a hemoprotein. Siroheme is required as a cofactor. The cofactor is [4Fe-4S] cluster.

The catalysed reaction is hydrogen sulfide + 3 NADP(+) + 3 H2O = sulfite + 3 NADPH + 4 H(+). It participates in sulfur metabolism; hydrogen sulfide biosynthesis; hydrogen sulfide from sulfite (NADPH route): step 1/1. In terms of biological role, component of the sulfite reductase complex that catalyzes the 6-electron reduction of sulfite to sulfide. This is one of several activities required for the biosynthesis of L-cysteine from sulfate. In Salmonella typhimurium (strain LT2 / SGSC1412 / ATCC 700720), this protein is Sulfite reductase [NADPH] hemoprotein beta-component (cysI).